The chain runs to 518 residues: Voltage-gated potassium channel regulatory subunit KCNG2 (518 aa).

Over 1–214 (MALLTGNADR…DMVENPHSGI (214 aa)) the chain is Cytoplasmic. The chain crosses the membrane as a helical span at residues 215 to 236 (PGKIFACISISFVAITAVSLCI). The Extracellular segment spans residues 237-257 (STMPDVREEEDRGECSQKCYD). Residues 258-279 (IFVLETVCVAWFSFEFLLRSIQ) traverse the membrane as a helical segment. Topologically, residues 280–290 (AENKCAFLKTP) are cytoplasmic. Residues 291–311 (LNIIDILAILPFYISLIVDMA) form a helical membrane-spanning segment. At 312 to 331 (STKNSSKPGGGAGNKYLERV) the chain is on the extracellular side. A helical; Voltage-sensor membrane pass occupies residues 332–352 (GLVLRFLRALRILYVMRLARH). The Cytoplasmic segment spans residues 353–367 (SLGLQTLGLTVRRCT). The helical transmembrane segment at 368-389 (REFGLLLLFLCVAMALFSPLVY) threads the bilayer. The Extracellular portion of the chain corresponds to 390-404 (LAESELGAKQEFTSI). Residues 405 to 416 (PTSYWWAVISMT) constitute an intramembrane region (helical). Residues 417–422 (TVGYGD) carry the Selectivity filter motif. An intramembrane segment occupies 417–424 (TVGYGDMV). Residues 425-431 (PRSIPGQ) are Extracellular-facing. Residues 432-460 (VVALSSILSGILLMAFPVTSIFHTFSRSY) form a helical membrane-spanning segment. Over 461–518 (SELKEQQQRAASRQMHQLEESTKLAGGGSSQWITAASPPDAAREDGRPELDQEAKRSC) the chain is Cytoplasmic. The interval 473–518 (RQMHQLEESTKLAGGGSSQWITAASPPDAAREDGRPELDQEAKRSC) is disordered. Basic and acidic residues predominate over residues 501 to 518 (AAREDGRPELDQEAKRSC).

The protein belongs to the potassium channel family. G (TC 1.A.1.2) subfamily. Kv6.2/KCNG2 sub-subfamily. In terms of assembly, heterodimer with KCNB1.

The protein localises to the cell membrane. In terms of biological role, regulatory alpha-subunit of the voltage-gated potassium (Kv) channel which, when coassembled with KCNB1, can modulate the kinetics and conductance-voltage relationship. Modulates channel activity by shifting the threshold and the half-maximal activation to more negative values. Potassium channel subunit that does not form functional channels by itself. The protein is Voltage-gated potassium channel regulatory subunit KCNG2 of Gallus gallus (Chicken).